The following is a 757-amino-acid chain: RNA-directed RNA polymerase catalytic subunit (757 aa).

The segment at 53–82 (GRWTTNTETGAPQLNPIDGPLPEDNEPSGY) is disordered. The span at 55-64 (WTTNTETGAP) shows a compositional bias: polar residues. 2 consecutive short sequence motifs (nuclear localization signal) follow at residues 187-195 (RKRRVRDNM) and 203-216 (RTIG…NKRS). Residues 249–256 (RGFVYFVE) form a promoter-binding site region. Residues 286 to 483 (VRKMMTNSQD…GINMSKKKSY (198 aa)) form the RdRp catalytic domain.

The protein belongs to the influenza viruses polymerase PB1 family. As to quaternary structure, influenza RNA polymerase is composed of three subunits: PB1, PB2 and PA. Interacts (via N-terminus) with PA (via C-terminus). Interacts (via C-terminus) with PB2 (via N-terminus); this interaction is essential for transcription initiation. Interacts (via C-terminus) with human PKP2 (via N-terminus); the interaction competitively inhibits the interaction between the RNA polymerase subunits PB1 and PB2. In terms of processing, phosphorylated by host PRKCA.

Its subcellular location is the host nucleus. It is found in the host cytoplasm. The catalysed reaction is RNA(n) + a ribonucleoside 5'-triphosphate = RNA(n+1) + diphosphate. Functionally, RNA-dependent RNA polymerase which is responsible for replication and transcription of virus RNA segments. The transcription of viral mRNAs occurs by a unique mechanism called cap-snatching. 5' methylated caps of cellular mRNAs are cleaved after 10-13 nucleotides by PA. In turn, these short capped RNAs are used as primers by PB1 for transcription of viral mRNAs. During virus replication, PB1 initiates RNA synthesis and copy vRNA into complementary RNA (cRNA) which in turn serves as a template for the production of more vRNAs. This Influenza A virus (strain A/Brevig Mission/1/1918 H1N1) (Influenza A virus (strain A/South Carolina/1/1918 H1N1)) protein is RNA-directed RNA polymerase catalytic subunit.